Reading from the N-terminus, the 777-residue chain is Protein argonaute (777 aa).

An N-terminal domain region spans residues 1–107 (MAPVQAADEM…ARLDDALEEA (107 aa)). Positions 108 to 182 (LPKYAAVKKR…TIGMRYDIEA (75 aa)) are linker L1. The interval 183 to 243 (SLRDLLEAGI…VNVNDAKLEG (61 aa)) is PAZ domain. Positions 244–341 (SKENFTRCLS…DRTGAKSAEY (98 aa)) are linker L2. A mid domain region spans residues 342-509 (AWRGLSQFGP…SIATYAKLNG (168 aa)). One can recognise a Piwi domain in the interval 445 to 757 (GIVVLFEDHA…IAELLGRLKS (313 aa)). Residues 510-777 (TPWTVNHDKA…IKLKWSRWFL (268 aa)) are PIWI domain. L777 provides a ligand contact to Mg(2+).

It belongs to the argonaute family. Long pAgo subfamily. The cofactor is Mg(2+).

In terms of biological role, a catalytically inactive argonaute protein. Binds 5'-phosphorylated RNA as the guide (gRNA) and short DNA as target DNA (tDNA); does not bind other nucleic acid combinations, does not bind tDNA alone. Has highest affinity for gRNA that begins with 5'-phospho-U and poor affinity for gRNA with 5'-OH. Upon expression in E.coli, plasmid sequences are found in RsAgo, its induction leads to plasmid degradation and suppression of genes encoded on foreign plasmids, suggesting it may also interfere with transcription. Does not interact with preformed gRNA:tDNA duplexes. Mismatches and nt bulges are tolerated in the ternary complex, however, they significantly reduce the affinity of RsAgo:gRNA for tDNA. Mismatched tDNA can cause dissociation of gRNA from RsAgo. In situ binds 2 populations of RNA (15-19 and 45 nucleotides, nt) and a population of ssDNA 22-24 nt in length. The small sense RNA is probably derived from mRNA degradation and strongly enriched for U in the first and U/C in the second positions. The small DNA is enriched for sequences complementary to the RNA, with 3 nt overhangs on both ends; another nuclease may trim the ends. The sequences are largely derived from exogenous plasmids or genome-encoded foreign elements such as prophages and transposons. Forms a ternary complex with gRNA and double-stranded tDNA only when the tDNA is open. This is Protein argonaute from Cereibacter sphaeroides (strain ATCC 17025 / ATH 2.4.3) (Rhodobacter sphaeroides).